Consider the following 420-residue polypeptide: Serine hydroxymethyltransferase (420 aa).

(6S)-5,6,7,8-tetrahydrofolate-binding positions include Leu-121 and 125-127 (GHL). Lys-229 bears the N6-(pyridoxal phosphate)lysine mark.

Belongs to the SHMT family. Homodimer. It depends on pyridoxal 5'-phosphate as a cofactor.

It localises to the cytoplasm. It catalyses the reaction (6R)-5,10-methylene-5,6,7,8-tetrahydrofolate + glycine + H2O = (6S)-5,6,7,8-tetrahydrofolate + L-serine. Its pathway is one-carbon metabolism; tetrahydrofolate interconversion. The protein operates within amino-acid biosynthesis; glycine biosynthesis; glycine from L-serine: step 1/1. In terms of biological role, catalyzes the reversible interconversion of serine and glycine with tetrahydrofolate (THF) serving as the one-carbon carrier. This reaction serves as the major source of one-carbon groups required for the biosynthesis of purines, thymidylate, methionine, and other important biomolecules. Also exhibits THF-independent aldolase activity toward beta-hydroxyamino acids, producing glycine and aldehydes, via a retro-aldol mechanism. The sequence is that of Serine hydroxymethyltransferase from Streptomyces coelicolor (strain ATCC BAA-471 / A3(2) / M145).